Consider the following 322-residue polypeptide: Large ribosomal subunit protein uL10 (322 aa).

A disordered region spans residues Ala294–Glu322. Over residues Glu304–Glu322 the composition is skewed to acidic residues.

This sequence belongs to the universal ribosomal protein uL10 family. In terms of assembly, P0 forms a pentameric complex by interaction with dimers of P1 and P2. Phosphorylated.

Ribosomal protein P0 is the functional equivalent of E.coli protein L10. The chain is Large ribosomal subunit protein uL10 from Lupinus luteus (European yellow lupine).